Reading from the N-terminus, the 99-residue chain is DNA-binding protein Fis (99 aa).

A DNA-binding region (H-T-H motif) is located at residues 75–94 (QTRAASIMGINRSTLRKKLK).

The protein belongs to the transcriptional regulatory Fis family. In terms of assembly, homodimer.

In terms of biological role, activates ribosomal RNA transcription. Plays a direct role in upstream activation of rRNA promoters. In Buchnera aphidicola subsp. Schizaphis graminum (strain Sg), this protein is DNA-binding protein Fis.